A 193-amino-acid polypeptide reads, in one-letter code: Holliday junction branch migration complex subunit RuvA (193 aa).

A domain I region spans residues methionine 1–glutamate 63. The interval cysteine 64–isoleucine 148 is domain II. The flexible linker stretch occupies residues alanine 149 to serine 150. Positions serine 150 to leucine 193 are domain III.

It belongs to the RuvA family. As to quaternary structure, homotetramer. Forms an RuvA(8)-RuvB(12)-Holliday junction (HJ) complex. HJ DNA is sandwiched between 2 RuvA tetramers; dsDNA enters through RuvA and exits via RuvB. An RuvB hexamer assembles on each DNA strand where it exits the tetramer. Each RuvB hexamer is contacted by two RuvA subunits (via domain III) on 2 adjacent RuvB subunits; this complex drives branch migration. In the full resolvosome a probable DNA-RuvA(4)-RuvB(12)-RuvC(2) complex forms which resolves the HJ.

The protein resides in the cytoplasm. The RuvA-RuvB-RuvC complex processes Holliday junction (HJ) DNA during genetic recombination and DNA repair, while the RuvA-RuvB complex plays an important role in the rescue of blocked DNA replication forks via replication fork reversal (RFR). RuvA specifically binds to HJ cruciform DNA, conferring on it an open structure. The RuvB hexamer acts as an ATP-dependent pump, pulling dsDNA into and through the RuvAB complex. HJ branch migration allows RuvC to scan DNA until it finds its consensus sequence, where it cleaves and resolves the cruciform DNA. This Neorickettsia sennetsu (strain ATCC VR-367 / Miyayama) (Ehrlichia sennetsu) protein is Holliday junction branch migration complex subunit RuvA.